Here is a 279-residue protein sequence, read N- to C-terminus: Zinc-finger homeodomain protein 1 (279 aa).

A compositionally biased stretch (acidic residues) spans 1–13 (MDFDDHDDGDEEM). A disordered region spans residues 1-47 (MDFDDHDDGDEEMPPMPVSSSYETPPQHGLAGGGMAPKPPGEIGSRV). The segment at 57–106 (YRECLKNHAVGIGGHAVDGCGEFMAAGEEGTIDALRCAACNCHRNFHRKE) adopts a ZF-HD dimerization-type; degenerate zinc-finger fold. Positions 168–190 (RPLALPSTSHSGRDDGDDLSGMV) are disordered. A DNA-binding region (homeobox) is located at residues 215 to 278 (KKRFRTKFTQ…NNKHTLGKKL (64 aa)).

As to quaternary structure, homo- and heterodimer with other ZFHD proteins.

It is found in the nucleus. Its function is as follows. Putative transcription factor. In Oryza sativa subsp. japonica (Rice), this protein is Zinc-finger homeodomain protein 1 (ZHD1).